Here is a 79-residue protein sequence, read N- to C-terminus: uncharacterized protein (79 aa).

It localises to the mitochondrion. This is an uncharacterized protein from Oenothera berteroana (Bertero's evening primrose).